A 64-amino-acid polypeptide reads, in one-letter code: MSGREGGKKKPLKAPKKEQSEMDDDDVAFKQKQKEQQKALDAAKQKASKGGPLLQGGIKKSGKK.

The tract at residues M1–K64 is disordered. The segment covering V27–K44 has biased composition (basic and acidic residues).

It belongs to the TMA7 family.

This chain is Translation machinery-associated protein 7 homolog, found in Anopheles funestus (African malaria mosquito).